The chain runs to 123 residues: Protein Wnt-7 (123 aa).

Serine 1 carries O-palmitoleoyl serine; by PORCN lipidation. Asparagine 79 and asparagine 90 each carry an N-linked (GlcNAc...) asparagine glycan. A disulfide bond links cysteine 89 and cysteine 104.

This sequence belongs to the Wnt family. In terms of processing, palmitoleoylation is required for efficient binding to frizzled receptors. Depalmitoleoylation leads to Wnt signaling pathway inhibition.

Its subcellular location is the secreted. It localises to the extracellular space. The protein resides in the extracellular matrix. Ligand for members of the frizzled family of seven transmembrane receptors. Probable developmental protein. May be a signaling molecule which affects the development of discrete regions of tissues. Is likely to signal over only few cell diameters. This chain is Protein Wnt-7 (WNT-7), found in Strongylocentrotus purpuratus (Purple sea urchin).